The following is a 117-amino-acid chain: Large ribosomal subunit protein uL18 (117 aa).

It belongs to the universal ribosomal protein uL18 family. In terms of assembly, part of the 50S ribosomal subunit; part of the 5S rRNA/L5/L18/L25 subcomplex. Contacts the 5S and 23S rRNAs.

Its function is as follows. This is one of the proteins that bind and probably mediate the attachment of the 5S RNA into the large ribosomal subunit, where it forms part of the central protuberance. The polypeptide is Large ribosomal subunit protein uL18 (Thioalkalivibrio sulfidiphilus (strain HL-EbGR7)).